The primary structure comprises 449 residues: Methionine aminopeptidase 2-2 (449 aa).

A disordered region spans residues 1–91 (MAAQAAPELA…PRIPLTTLFP (91 aa)). Polar residues predominate over residues 15–28 (NKNTGSAEASTVPA). Residues 34–50 (DDAENEGDSDDDRDDEQ) show a composition bias toward acidic residues. The segment covering 61–75 (KKKKKKRPKKKKKTA) has biased composition (basic residues). His-199 serves as a coordination point for substrate. A divalent metal cation contacts are provided by Asp-219, Asp-230, and His-299. His-307 provides a ligand contact to substrate. A divalent metal cation-binding residues include Glu-335 and Glu-430.

It belongs to the peptidase M24A family. Methionine aminopeptidase eukaryotic type 2 subfamily. It depends on Co(2+) as a cofactor. Zn(2+) is required as a cofactor. The cofactor is Mn(2+). Fe(2+) serves as cofactor.

The protein localises to the cytoplasm. It carries out the reaction Release of N-terminal amino acids, preferentially methionine, from peptides and arylamides.. Cotranslationally removes the N-terminal methionine from nascent proteins. The N-terminal methionine is often cleaved when the second residue in the primary sequence is small and uncharged (Met-Ala-, Cys, Gly, Pro, Ser, Thr, or Val). The protein is Methionine aminopeptidase 2-2 of Arthroderma gypseum (strain ATCC MYA-4604 / CBS 118893) (Microsporum gypseum).